Consider the following 299-residue polypeptide: J domain-containing protein CG6693 (299 aa).

Residues 15-82 (DVYKLMELAR…QKRALYDEQG (68 aa)) enclose the J domain. S239 is subject to Phosphoserine. The segment at 266 to 299 (FEKKKKKSKKPAAKQETKPKLNGVKAGRVEKGKN) is disordered. Over residues 268–277 (KKKKKSKKPA) the composition is skewed to basic residues.

This Drosophila melanogaster (Fruit fly) protein is J domain-containing protein CG6693.